A 588-amino-acid chain; its full sequence is MIGKVVVSVASILLIVGVAIGVVAFINKNGDANLSPQMKAVQGICQSTSDKASCVKTLEPVKSEDPNKLIKAFMLATKDELTKSSNFTGQTEVNMGSSISPNNKAVLDYCKRVFMYALEDLATIIEEMGEDLSQIGSKIDQLKQWLIGVYNYQTDCLDDIEEDDLRKAIGEGIANSKILTTNAIDIFHTVVSAMAKINNKVDDLKNMTGGIPTPGAPPVVDESPVADPDGPARRLLEDIDETGIPTWVSGADRKLMAKAGRGRRGGRGGGARVRTNFVVAKDGSGQFKTVQQAVDACPENNRGRCIIYIKAGLYREQVIIPKKKNNIFMFGDGARKTVISYNRSVALSRGTTTSLSATVQVESEGFMAKWMGFKNTAGPMGHQAAAIRVNGDRAVIFNCRFDGYQDTLYVNNGRQFYRNCVVSGTVDFIFGKSATVIQNTLIVVRKGSKGQYNTVTADGNELGLGMKIGIVLQNCRIVPDRKLTPERLTVATYLGRPWKKFSTTVIMSTEMGDLIRPEGWKIWDGESFHKSCRYVEYNNRGPGAFANRRVNWAKVARSAAEVNGFTAANWLGPINWIQEANVPVTIGL.

The signal sequence occupies residues 1 to 24 (MIGKVVVSVASILLIVGVAIGVVA). Residues Asn86, Asn206, and Asn342 are each glycosylated (N-linked (GlcNAc...) asparagine). 2 residues coordinate substrate: Thr353 and Gln383. The Proton donor role is filled by Asp406. Asp427 serves as the catalytic Nucleophile. Substrate contacts are provided by Arg496 and Trp498.

The protein in the N-terminal section; belongs to the PMEI family. It in the C-terminal section; belongs to the pectinesterase family. Expressed in pollen grains and pollen tubes.

It localises to the secreted. The protein localises to the cell wall. It catalyses the reaction [(1-&gt;4)-alpha-D-galacturonosyl methyl ester](n) + n H2O = [(1-&gt;4)-alpha-D-galacturonosyl](n) + n methanol + n H(+). Its pathway is glycan metabolism; pectin degradation; 2-dehydro-3-deoxy-D-gluconate from pectin: step 1/5. Its function is as follows. Acts in the modification of cell walls via demethylesterification of cell wall pectin. Plays an important role in growth of pollen tubes in female floral tissues, possibly via enhancing the interaction between the pollen tube and female floral tissues by modification of the cell walls. The protein is Pectinesterase 4 (PME4) of Arabidopsis thaliana (Mouse-ear cress).